The primary structure comprises 192 residues: Phosphoheptose isomerase (192 aa).

The SIS domain occupies 34–192 (VVDAYKAGNK…VERELFVKGK (159 aa)). Position 49 to 51 (49 to 51 (NGG)) interacts with substrate. H58 and E62 together coordinate Zn(2+). Substrate is bound by residues E62, 91 to 92 (ND), 117 to 119 (STS), S122, and Q169. Q169 and H177 together coordinate Zn(2+).

The protein belongs to the SIS family. GmhA subfamily. Homotetramer. Zn(2+) serves as cofactor.

Its subcellular location is the cytoplasm. It carries out the reaction 2 D-sedoheptulose 7-phosphate = D-glycero-alpha-D-manno-heptose 7-phosphate + D-glycero-beta-D-manno-heptose 7-phosphate. The protein operates within carbohydrate biosynthesis; D-glycero-D-manno-heptose 7-phosphate biosynthesis; D-glycero-alpha-D-manno-heptose 7-phosphate and D-glycero-beta-D-manno-heptose 7-phosphate from sedoheptulose 7-phosphate: step 1/1. Functionally, catalyzes the isomerization of sedoheptulose 7-phosphate in D-glycero-D-manno-heptose 7-phosphate. The chain is Phosphoheptose isomerase from Citrifermentans bemidjiense (strain ATCC BAA-1014 / DSM 16622 / JCM 12645 / Bem) (Geobacter bemidjiensis).